A 32-amino-acid chain; its full sequence is MSDIN-like toxin proprotein 3 (32 aa).

Positions 1 to 10 (MSDINATRLP) are excised as a propeptide. The segment at residues 11-17 (VWIGYSP) is a cross-link (cyclopeptide (Val-Pro)). The propeptide occupies 18–32 (CVGDDAVALLNRGEG).

This sequence belongs to the MSDIN fungal toxin family. Processed by the macrocyclase-peptidase enzyme POPB to yield a toxic cyclic heptapeptide. POPB first removes 10 residues from the N-terminus. Conformational trapping of the remaining peptide forces the enzyme to release this intermediate rather than proceed to macrocyclization. The enzyme rebinds the remaining peptide in a different conformation and catalyzes macrocyclization of the N-terminal 7 residues.

In terms of biological role, probable toxin that belongs to the MSDIN-like toxin family responsible for a large number of food poisoning cases and deaths. In Amanita fuligineoides, this protein is MSDIN-like toxin proprotein 3.